We begin with the raw amino-acid sequence, 114 residues long: Phosphoribosyl-AMP cyclohydrolase (114 aa).

Asp80 is a Mg(2+) binding site. A Zn(2+)-binding site is contributed by Cys81. Asp82 and Asp84 together coordinate Mg(2+). Residues Cys97 and Cys104 each coordinate Zn(2+).

Belongs to the PRA-CH family. As to quaternary structure, homodimer. The cofactor is Mg(2+). Zn(2+) is required as a cofactor.

The protein resides in the cytoplasm. It catalyses the reaction 1-(5-phospho-beta-D-ribosyl)-5'-AMP + H2O = 1-(5-phospho-beta-D-ribosyl)-5-[(5-phospho-beta-D-ribosylamino)methylideneamino]imidazole-4-carboxamide. It participates in amino-acid biosynthesis; L-histidine biosynthesis; L-histidine from 5-phospho-alpha-D-ribose 1-diphosphate: step 3/9. Its function is as follows. Catalyzes the hydrolysis of the adenine ring of phosphoribosyl-AMP. The chain is Phosphoribosyl-AMP cyclohydrolase from Rhodococcus jostii (strain RHA1).